A 317-amino-acid chain; its full sequence is Annexin D2 (317 aa).

An N-acetylalanine modification is found at Ala2. 4 Annexin repeats span residues 11–82 (PLPE…LWTL), 83–154 (DPPE…PLVS), 166–238 (MLAR…AVIT), and 242–313 (YPEK…ALLG). Residues Phe24, Gly26, Gly28, and Glu68 each coordinate Ca(2+). At Ser95 the chain carries Phosphoserine. Thr100 and Thr112 each carry phosphothreonine. At Tyr129 the chain carries Phosphotyrosine. Ca(2+)-binding residues include Ile255 and Gly259. The residue at position 284 (Tyr284) is a Phosphotyrosine. A Phosphoserine modification is found at Ser289. Positions 299, 300, and 305 each coordinate Ca(2+).

Belongs to the annexin (TC 1.A.31.1) family. Expressed mainly in roots and flowers. Low in stems and bearly detectable in leaves.

The protein localises to the cytoplasm. Its subcellular location is the cytosol. It localises to the membrane. Functionally, may mediate regulated, targeted secretion of Golgi-derived vesicles during seedling development. The sequence is that of Annexin D2 (ANN2) from Arabidopsis thaliana (Mouse-ear cress).